A 531-amino-acid chain; its full sequence is Putative heme-binding protein HQ_1094A (531 aa).

His-177 contributes to the heme binding site. A disordered region spans residues 269–340 (AHGEAHGHAH…STNTNTQDSE (72 aa)). A compositionally biased stretch (basic and acidic residues) spans 271–281 (GEAHGHAHGDS). Over residues 284 to 306 (GSGGGGGSSHGQSPGGASAGGSA) the composition is skewed to gly residues. Basic and acidic residues predominate over residues 308–317 (GTEDADHSDS). The segment covering 318–338 (RSTTSADTTQSDTSTNTNTQD) has biased composition (low complexity). The region spanning 441-529 (GTMGMFYTVK…VLSERPRHVF (89 aa)) is the ABM domain.

This sequence in the N-terminal section; belongs to the ChdC family.

The chain is Putative heme-binding protein HQ_1094A from Haloquadratum walsbyi (strain DSM 16790 / HBSQ001).